The following is a 37-amino-acid chain: Large ribosomal subunit protein bL36c (37 aa).

This sequence belongs to the bacterial ribosomal protein bL36 family.

It localises to the plastid. The protein localises to the chloroplast. The chain is Large ribosomal subunit protein bL36c (rpl36) from Chlorella vulgaris (Green alga).